Here is a 365-residue protein sequence, read N- to C-terminus: Flagellar P-ring protein (365 aa).

An N-terminal signal peptide occupies residues 1–19; sequence MIKFLSALILLLVTTAAQA.

It belongs to the FlgI family. In terms of assembly, the basal body constitutes a major portion of the flagellar organelle and consists of four rings (L,P,S, and M) mounted on a central rod.

It localises to the periplasm. Its subcellular location is the bacterial flagellum basal body. Its function is as follows. Assembles around the rod to form the L-ring and probably protects the motor/basal body from shearing forces during rotation. This is Flagellar P-ring protein from Shigella dysenteriae serotype 1 (strain Sd197).